Here is a 306-residue protein sequence, read N- to C-terminus: Ornithine carbamoyltransferase, anabolic (306 aa).

Residues serine 46 to threonine 49, glutamine 73, arginine 97, and histidine 124 to glutamine 127 each bind carbamoyl phosphate. Residues asparagine 156, aspartate 220, and serine 224–methionine 225 contribute to the L-ornithine site. Carbamoyl phosphate is bound by residues cysteine 260–leucine 261 and arginine 288.

It belongs to the aspartate/ornithine carbamoyltransferase superfamily. OTCase family. Homohexamer; dimer of trimers.

The protein resides in the cytoplasm. The catalysed reaction is carbamoyl phosphate + L-ornithine = L-citrulline + phosphate + H(+). The protein operates within amino-acid biosynthesis; L-arginine biosynthesis; L-arginine from L-ornithine and carbamoyl phosphate: step 1/3. In terms of biological role, reversibly catalyzes the transfer of the carbamoyl group from carbamoyl phosphate (CP) to the N(epsilon) atom of ornithine (ORN) to produce L-citrulline, which is a substrate for argininosuccinate synthetase (ArgG) involved in the final step in arginine biosynthesis. The sequence is that of Ornithine carbamoyltransferase, anabolic from Campylobacter jejuni subsp. jejuni serotype O:2 (strain ATCC 700819 / NCTC 11168).